We begin with the raw amino-acid sequence, 189 residues long: MIVILNNGGQYVHRIQRSLKYLDVPAKIIPNSTTLEEIIADSEIKGIILSGGPDITKATNCENIALNSELPVLGICLGHQLISKAYGGEVSRADSEEYASIKIYVKEENDLFNGVPSEFTAWASHMDEVKVIPDCFEVLAYSDICGIESIKHKEKSIYGVQFHPEVSHTEYGDVILKNFCKKCGFEFEE.

The Glutamine amidotransferase type-1 domain occupies 1 to 189 (MIVILNNGGQ…CKKCGFEFEE (189 aa)). Cysteine 76 acts as the Nucleophile in catalysis. Active-site residues include histidine 163 and glutamate 165.

Heterodimer composed of a glutamine amidotransferase subunit (A) and a GMP-binding subunit (B).

The catalysed reaction is XMP + L-glutamine + ATP + H2O = GMP + L-glutamate + AMP + diphosphate + 2 H(+). It functions in the pathway purine metabolism; GMP biosynthesis; GMP from XMP (L-Gln route): step 1/1. In terms of biological role, catalyzes the synthesis of GMP from XMP. This is GMP synthase [glutamine-hydrolyzing] subunit A from Methanococcus maripaludis (strain C5 / ATCC BAA-1333).